A 400-amino-acid chain; its full sequence is N(alpha)-acyl-glutamine aminoacylase (400 aa).

This sequence belongs to the peptidase M20 family. Zn(2+) is required as a cofactor.

It carries out the reaction an N(2)-acyl-L-glutamine + H2O = a carboxylate + L-glutamine. It catalyses the reaction N(2)-[(2E)-3-methylhex-2-enoyl]-L-glutaminate + H2O = (2E)-3-methylhex-2-enoate + L-glutamine. The catalysed reaction is N(2)-(3-hydroxy-3-methylhexanoyl)-L-glutaminate + H2O = 3-hydroxy-3-methylhexanoate + L-glutamine. With respect to regulation, partial loss of activity with the combination Mn(2+) and chelating agents. Activity is lost in presence of 0.5 mM dithiothreitol. Its function is as follows. Hydrolyzes odorless N-alpha-acyl-L-glutamine conjugates of short- and medium-chain fatty acids, releasing human axillary malodor compounds. The enzyme is highly specific for the glutamine residue but has a low specificity for the acyl part of the substrate. The two most common products are 3-methyl-2-hexenoic acid (3M2H) and 3-hydroxy-3-methyl-hexanoic acid (HMHA), which are produced from the odorless precursors N-alpha-3-methyl-2-hexenoyl-L-glutamine (3M2H-Gln) and N-alpha-3-hydroxy-3-methylhexanoyl-L-glutamine (HMHA-Gln). In addition, over 28 different carboxylic acids contributing to human body odor are released by this enzyme from odorless axilla secretions, including several aliphatic 3-hydroxy acids with 4-Me branches, 3,4-unsaturated, 4-Et-branched aliphatic acids, and a variety of degradation products of amino acids. This chain is N(alpha)-acyl-glutamine aminoacylase, found in Corynebacterium striatum.